A 208-amino-acid chain; its full sequence is MVKAKKLVFKWSLLVFSFFTLSLFLVSCTENVREIKSSSVINELFPNFWVFITHLLAFFILLTLMIFLFWKPTQRFLNNRKNLLEAQIKQANELEKQARNLLEESNQRHEKALIVSKEIVDQANYEALQLKSEIEKTANRQANLMIFQARQEIEKERRSLKEQSIKESVELAMLAAQELILKKIDQKSDREFIDKFIRDLEANETEDD.

Residues 1–27 (MVKAKKLVFKWSLLVFSFFTLSLFLVS) form the signal peptide. The N-palmitoyl cysteine moiety is linked to residue Cys-28. Cys-28 carries the S-diacylglycerol cysteine lipid modification. A helical membrane pass occupies residues 49–69 (WVFITHLLAFFILLTLMIFLF).

The protein belongs to the ATPase B chain family. F-type ATPases have 2 components, F(1) - the catalytic core - and F(0) - the membrane proton channel. F(1) has five subunits: alpha(3), beta(3), gamma(1), delta(1), epsilon(1). F(0) has three main subunits: a(1), b(2) and c(10-14). The alpha and beta chains form an alternating ring which encloses part of the gamma chain. F(1) is attached to F(0) by a central stalk formed by the gamma and epsilon chains, while a peripheral stalk is formed by the delta and b chains.

It is found in the cell membrane. Functionally, f(1)F(0) ATP synthase produces ATP from ADP in the presence of a proton or sodium gradient. F-type ATPases consist of two structural domains, F(1) containing the extramembraneous catalytic core and F(0) containing the membrane proton channel, linked together by a central stalk and a peripheral stalk. During catalysis, ATP synthesis in the catalytic domain of F(1) is coupled via a rotary mechanism of the central stalk subunits to proton translocation. Its function is as follows. Component of the F(0) channel, it forms part of the peripheral stalk, linking F(1) to F(0). The polypeptide is ATP synthase subunit b (Mycoplasma genitalium (strain ATCC 33530 / DSM 19775 / NCTC 10195 / G37) (Mycoplasmoides genitalium)).